We begin with the raw amino-acid sequence, 219 residues long: Ribonuclease HII (219 aa).

The region spanning 30–219 (RVIAGIDEAG…VREHVTCPSS (190 aa)) is the RNase H type-2 domain. Residues Asp-36, Glu-37, and Asp-128 each coordinate a divalent metal cation.

It belongs to the RNase HII family. Mn(2+) serves as cofactor. The cofactor is Mg(2+).

The protein resides in the cytoplasm. The catalysed reaction is Endonucleolytic cleavage to 5'-phosphomonoester.. Its function is as follows. Endonuclease that specifically degrades the RNA of RNA-DNA hybrids. This chain is Ribonuclease HII, found in Pelobacter propionicus (strain DSM 2379 / NBRC 103807 / OttBd1).